Consider the following 414-residue polypeptide: UDP-N-acetylmuramoylalanine--D-glutamate ligase (414 aa).

Residue glycine 104–threonine 110 coordinates ATP.

It belongs to the MurCDEF family.

The protein resides in the cytoplasm. The catalysed reaction is UDP-N-acetyl-alpha-D-muramoyl-L-alanine + D-glutamate + ATP = UDP-N-acetyl-alpha-D-muramoyl-L-alanyl-D-glutamate + ADP + phosphate + H(+). Its pathway is cell wall biogenesis; peptidoglycan biosynthesis. Cell wall formation. Catalyzes the addition of glutamate to the nucleotide precursor UDP-N-acetylmuramoyl-L-alanine (UMA). This chain is UDP-N-acetylmuramoylalanine--D-glutamate ligase, found in Francisella philomiragia subsp. philomiragia (strain ATCC 25017 / CCUG 19701 / FSC 153 / O#319-036).